Here is a 465-residue protein sequence, read N- to C-terminus: Ribulose bisphosphate carboxylase large chain (465 aa).

K4 carries the N6,N6,N6-trimethyllysine modification. Substrate contacts are provided by N113 and T163. Residue K165 is the Proton acceptor of the active site. K167 contributes to the substrate binding site. The Mg(2+) site is built by K191, D193, and E194. Position 191 is an N6-carboxylysine (K191). Residue H284 is the Proton acceptor of the active site. Substrate-binding residues include R285, H317, and S369.

Belongs to the RuBisCO large chain family. Type I subfamily. As to quaternary structure, heterohexadecamer of 8 large chains and 8 small chains; disulfide-linked. The disulfide link is formed within the large subunit homodimers. It depends on Mg(2+) as a cofactor. Post-translationally, the disulfide bond which can form in the large chain dimeric partners within the hexadecamer appears to be associated with oxidative stress and protein turnover.

It localises to the plastid. It is found in the chloroplast. The catalysed reaction is 2 (2R)-3-phosphoglycerate + 2 H(+) = D-ribulose 1,5-bisphosphate + CO2 + H2O. The enzyme catalyses D-ribulose 1,5-bisphosphate + O2 = 2-phosphoglycolate + (2R)-3-phosphoglycerate + 2 H(+). Functionally, ruBisCO catalyzes two reactions: the carboxylation of D-ribulose 1,5-bisphosphate, the primary event in carbon dioxide fixation, as well as the oxidative fragmentation of the pentose substrate in the photorespiration process. Both reactions occur simultaneously and in competition at the same active site. The sequence is that of Ribulose bisphosphate carboxylase large chain from Humiria balsamifera (Tauroniro).